The sequence spans 200 residues: Imidazoleglycerol-phosphate dehydratase (200 aa).

Belongs to the imidazoleglycerol-phosphate dehydratase family.

It is found in the cytoplasm. It catalyses the reaction D-erythro-1-(imidazol-4-yl)glycerol 3-phosphate = 3-(imidazol-4-yl)-2-oxopropyl phosphate + H2O. It functions in the pathway amino-acid biosynthesis; L-histidine biosynthesis; L-histidine from 5-phospho-alpha-D-ribose 1-diphosphate: step 6/9. The sequence is that of Imidazoleglycerol-phosphate dehydratase from Bifidobacterium animalis subsp. lactis (strain AD011).